The primary structure comprises 413 residues: Arogenate dehydratase/prephenate dehydratase 6, chloroplastic (413 aa).

Residues 1 to 44 constitute a chloroplast transit peptide; it reads MKALSSSSPILGASQPATATALIARSGRSEWQSSCAILTSKVIS. A Prephenate dehydratase domain is found at 117–294; that stretch reads RVAYQGVPGA…NVTRFVMLAR (178 aa). The ACT domain maps to 308-399; the sequence is SIVFAHEKGT…SFLRVLGSYP (92 aa).

Expressed in roots, leaves, stems, flowers and siliques.

The protein localises to the plastid. It localises to the chloroplast stroma. The catalysed reaction is L-arogenate + H(+) = L-phenylalanine + CO2 + H2O. The enzyme catalyses prephenate + H(+) = 3-phenylpyruvate + CO2 + H2O. The protein operates within amino-acid biosynthesis; L-phenylalanine biosynthesis; L-phenylalanine from L-arogenate: step 1/1. It functions in the pathway amino-acid biosynthesis; L-phenylalanine biosynthesis; phenylpyruvate from prephenate: step 1/1. Functionally, converts the prephenate produced from the shikimate-chorismate pathway into phenylalanine. Dehydratase that uses arogenate and prephenate as substrates. Utilzes more efficiently arogenate than prephenate. This is Arogenate dehydratase/prephenate dehydratase 6, chloroplastic from Arabidopsis thaliana (Mouse-ear cress).